The sequence spans 431 residues: Zeaxanthin glucosyltransferase (431 aa).

Belongs to the UDP-glycosyltransferase family.

It catalyses the reaction all-trans-zeaxanthin + 2 UDP-alpha-D-glucose = zeaxanthin bis(beta-D-glucoside) + 2 UDP + 2 H(+). It functions in the pathway carotenoid biosynthesis; zeaxanthin diglucoside biosynthesis. Functionally, catalyzes the glycosylation reaction which converts zeaxanthin to zeaxanthin bis(beta-D-glucoside). The reaction proceeds in two steps with the monoglucoside as an intermediate. The protein is Zeaxanthin glucosyltransferase (crtX) of Pantoea ananas (Erwinia uredovora).